The chain runs to 397 residues: Elongation factor Tu (397 aa).

In terms of domain architecture, tr-type G spans 10-206 (KPHVNIGTIG…AVDEYIPTPE (197 aa)). Residues 19–26 (GHIDHGKT) form a G1 region. 19–26 (GHIDHGKT) contributes to the GTP binding site. Mg(2+) is bound at residue Thr-26. Positions 62 to 66 (GITIS) are G2. The interval 83 to 86 (DCPG) is G3. GTP-binding positions include 83–87 (DCPGH) and 138–141 (NKCD). The G4 stretch occupies residues 138–141 (NKCD). Residues 176-178 (AAF) form a G5 region.

The protein belongs to the TRAFAC class translation factor GTPase superfamily. Classic translation factor GTPase family. EF-Tu/EF-1A subfamily. As to quaternary structure, monomer.

It localises to the cytoplasm. It catalyses the reaction GTP + H2O = GDP + phosphate + H(+). GTP hydrolase that promotes the GTP-dependent binding of aminoacyl-tRNA to the A-site of ribosomes during protein biosynthesis. This chain is Elongation factor Tu, found in Nocardioides sp. (strain ATCC BAA-499 / JS614).